The sequence spans 354 residues: Phosphate acyltransferase (354 aa).

The protein belongs to the PlsX family. In terms of assembly, homodimer. Probably interacts with PlsY.

It is found in the cytoplasm. The catalysed reaction is a fatty acyl-[ACP] + phosphate = an acyl phosphate + holo-[ACP]. The protein operates within lipid metabolism; phospholipid metabolism. In terms of biological role, catalyzes the reversible formation of acyl-phosphate (acyl-PO(4)) from acyl-[acyl-carrier-protein] (acyl-ACP). This enzyme utilizes acyl-ACP as fatty acyl donor, but not acyl-CoA. This Ralstonia nicotianae (strain ATCC BAA-1114 / GMI1000) (Ralstonia solanacearum) protein is Phosphate acyltransferase.